The chain runs to 239 residues: tRNA (guanine-N(1)-)-methyltransferase (239 aa).

S-adenosyl-L-methionine contacts are provided by residues G108 and 127-132 (LGDFVL).

The protein belongs to the RNA methyltransferase TrmD family. As to quaternary structure, homodimer.

It localises to the cytoplasm. The catalysed reaction is guanosine(37) in tRNA + S-adenosyl-L-methionine = N(1)-methylguanosine(37) in tRNA + S-adenosyl-L-homocysteine + H(+). Its function is as follows. Specifically methylates guanosine-37 in various tRNAs. This Streptococcus thermophilus (strain ATCC BAA-250 / LMG 18311) protein is tRNA (guanine-N(1)-)-methyltransferase.